We begin with the raw amino-acid sequence, 313 residues long: tRNA dimethylallyltransferase (313 aa).

An ATP-binding site is contributed by 14–21 (GPTASGKT). 16-21 (TASGKT) provides a ligand contact to substrate. Interaction with substrate tRNA stretches follow at residues 39-42 (DSAL) and 163-167 (QRIGR).

The protein belongs to the IPP transferase family. In terms of assembly, monomer. Requires Mg(2+) as cofactor.

The catalysed reaction is adenosine(37) in tRNA + dimethylallyl diphosphate = N(6)-dimethylallyladenosine(37) in tRNA + diphosphate. Functionally, catalyzes the transfer of a dimethylallyl group onto the adenine at position 37 in tRNAs that read codons beginning with uridine, leading to the formation of N6-(dimethylallyl)adenosine (i(6)A). The polypeptide is tRNA dimethylallyltransferase (Thiobacillus denitrificans (strain ATCC 25259 / T1)).